A 173-amino-acid chain; its full sequence is MAKRRKTSREKKEDTNWQERVIQIRRVSKVVKGGKKLSFRAIVVVGNETGQVGVGVGKAGDVIGAVRKGVADGKKQLIEVPLTKSNSITHITNGVSGGAKVVVRPAAPGTGVIAGGAVRTVLELAGVKNILAKQLGSNNPLNNARAAINALETLRTFSEVAEERGVSVEHLYT.

An S5 DRBM domain is found at 17–80; it reads WQERVIQIRR…ADGKKQLIEV (64 aa).

The protein belongs to the universal ribosomal protein uS5 family. Part of the 30S ribosomal subunit. Contacts proteins S4 and S8.

Functionally, with S4 and S12 plays an important role in translational accuracy. In terms of biological role, located at the back of the 30S subunit body where it stabilizes the conformation of the head with respect to the body. The protein is Small ribosomal subunit protein uS5 of Synechocystis sp. (strain ATCC 27184 / PCC 6803 / Kazusa).